The following is a 189-amino-acid chain: MVKVIASSVRKGNVLDVDGKLYVVLTAQNFHPGKGTPVTQVDMRRIVDGVKVSERWRTTEQVERAFVEDVSFQFLYEDGEGFHFMNPSSYDQVVVDVDTMGDDKAYLQEGMSCILSMHEGIALALQLPRHVTLEIMETEPVVKGQTASSSYKPAILSNGVRAMVPPHINAGTRVVIATEDNSYVERAKD.

The protein belongs to the elongation factor P family.

The protein resides in the cytoplasm. It participates in protein biosynthesis; polypeptide chain elongation. Its function is as follows. Involved in peptide bond synthesis. Stimulates efficient translation and peptide-bond synthesis on native or reconstituted 70S ribosomes in vitro. Probably functions indirectly by altering the affinity of the ribosome for aminoacyl-tRNA, thus increasing their reactivity as acceptors for peptidyl transferase. The polypeptide is Elongation factor P (Rhizobium johnstonii (strain DSM 114642 / LMG 32736 / 3841) (Rhizobium leguminosarum bv. viciae)).